The sequence spans 344 residues: L-rhamnose-proton symporter (344 aa).

10 helical membrane-spanning segments follow: residues 4–24, 38–58, 68–88, 101–121, 137–157, 175–195, 214–234, 259–279, 290–310, and 323–343; these read AITM…CFYA, WSVG…ALLL, FSLS…IGNI, MGIG…TPII, TLLG…AGQL, LVLA…MNAA, LPSY…FCFI, VLLS…YAWG, ISWM…GLVL, and VLSL…IGMA.

This sequence belongs to the L-rhamnose transporter (TC 2.A.7.6) family.

Its subcellular location is the cell inner membrane. It catalyses the reaction L-rhamnopyranose(in) + H(+)(in) = L-rhamnopyranose(out) + H(+)(out). Uptake of L-rhamnose across the cytoplasmic membrane with the concomitant transport of protons into the cell (symport system). This Escherichia coli (strain 55989 / EAEC) protein is L-rhamnose-proton symporter.